The sequence spans 396 residues: Ribosomal RNA large subunit methyltransferase G (396 aa).

It belongs to the methyltransferase superfamily. RlmG family.

The protein resides in the cytoplasm. The catalysed reaction is guanosine(1835) in 23S rRNA + S-adenosyl-L-methionine = N(2)-methylguanosine(1835) in 23S rRNA + S-adenosyl-L-homocysteine + H(+). Functionally, specifically methylates the guanine in position 1835 (m2G1835) of 23S rRNA. This chain is Ribosomal RNA large subunit methyltransferase G, found in Yersinia enterocolitica serotype O:8 / biotype 1B (strain NCTC 13174 / 8081).